Reading from the N-terminus, the 184-residue chain is Ribosome-recycling factor (184 aa).

The protein belongs to the RRF family.

The protein localises to the cytoplasm. Its function is as follows. Responsible for the release of ribosomes from messenger RNA at the termination of protein biosynthesis. May increase the efficiency of translation by recycling ribosomes from one round of translation to another. This chain is Ribosome-recycling factor, found in Borrelia recurrentis (strain A1).